Consider the following 129-residue polypeptide: DNA base-flipping protein (129 aa).

The protein belongs to the MGMT family. ATL subfamily. As to quaternary structure, interacts with HelD and UvrA.

Involved in DNA damage recognition. Binds DNA containing O(6)-methylguanine and larger O(6)-alkylguanine adducts, and to double-stranded DNA that contains an AP (apurinic/apyrimidinic) site. Binds to the damaged base and flips the base out of the DNA duplex into an extrahelical conformation, which allows processing by repair proteins. Works in partnership with the nucleotide excision repair (NER) pathway to enhance the repair of the O(6)-alkylguanine adducts larger than the methyl adduct. Also prevents methyl-directed mismatch repair (MMR)-mediated attack of the O(6)-alkylguanine:T mispairs for the larger alkyl groups. The sequence is that of DNA base-flipping protein from Escherichia coli (strain K12).